We begin with the raw amino-acid sequence, 408 residues long: Na(+)-translocating NADH-quinone reductase subunit F (408 aa).

A helical membrane pass occupies residues 4 to 24 (IYLGVGMFTIIVLVLVAIIMF). The 95-residue stretch at 33 to 127 (GDVEILINDD…DMEIELPEEV (95 aa)) folds into the 2Fe-2S ferredoxin-type domain. The [2Fe-2S] cluster site is built by Cys70, Cys76, Cys79, and Cys111. One can recognise an FAD-binding FR-type domain in the interval 130–270 (IRKWDCTVKS…SGPFGEFFAK (141 aa)).

Belongs to the NqrF family. Composed of six subunits; NqrA, NqrB, NqrC, NqrD, NqrE and NqrF. [2Fe-2S] cluster serves as cofactor. The cofactor is FAD.

It localises to the cell inner membrane. The enzyme catalyses a ubiquinone + n Na(+)(in) + NADH + H(+) = a ubiquinol + n Na(+)(out) + NAD(+). Functionally, NQR complex catalyzes the reduction of ubiquinone-1 to ubiquinol by two successive reactions, coupled with the transport of Na(+) ions from the cytoplasm to the periplasm. The first step is catalyzed by NqrF, which accepts electrons from NADH and reduces ubiquinone-1 to ubisemiquinone by a one-electron transfer pathway. The sequence is that of Na(+)-translocating NADH-quinone reductase subunit F from Idiomarina loihiensis (strain ATCC BAA-735 / DSM 15497 / L2-TR).